The primary structure comprises 1178 residues: MLQRISSKLHRRFLSGLLRVKHYPLRRILLPLILLQIIIITFIWSNSPQRNGLGRDADYLLPNYNELDSDDDSWYSILTSSFKNDRKIQFAKTLYENLKFGTNPKWVNEYTLQNDLLSVKMGPRKGSKLESVDELKFYDFDPRLTWSVVLNHLQNNDADQPEKLPFSWYDWTTFHELNKLISIDKTVLPCNFLFQSAFDKESLEAIETELGEPLFLYERPKYAQKLWYKAARNQDRIKDSKELKKHCSKLFTPDGHGSPKGLRFNTQFQIKELYDKVRPEVYQLQARNYILTTQSHPLSISIIESDNSTYQVPLQTEKSKNLVQSGLLQEYINDNINSTNKRKKNKQDVEFNHNRLFQEFVNNDQVNSLYKLEIEETDKFTFDKDLVYLSPSDFKFDASKKIEELEEQKKLYPDKFSAHNENYLNSLKNSVKTSPALQRKFFYEAGAVKQYKGMGFHRDKRFFNVDTLINDKQEYQARLNSMIRTFQKFTKANGIISWLSHGTLYGYLYNGMAFPWDNDFDLQMPIKHLQLLSQYFNQSLILEDPRQGNGRYFLDVSDSLTVRINGNGKNNIDARFIDVDTGLYIDITGLASTSAPSRDYLNSYIEERLQEEHLDINNIPESNGETATLPDKVDDGLVNMATLNITELRDYITSDENKNHKRVPTDTDLKDLLKKELEELPKSKTIENKLNPKQRYFLNEKLKLYNCRNNHFNSFEELSPLINTVFHGVPALIPHRHTYCLHNEYHVPDRYAFDAYKNTAYLPEFRFWFDYDGLKKCSNINSWYPNIPSINSWNPNLLKEISSTKFESKLFDSNKVSEYSFKNLSMDDVRLIYKNIPKAGFIEVFTNLYNSFNVTAYRQKELEIQYCQNLTFIEKKKLLHQLRINVAPKLSSPAKDPFLFGYEKAMWKDLSKSMNQTTLDQVTKIVHEEYVGKIIDLSESLKYRNFSLFNITFDETGTTLDDNTEDYTPANTVEVNPVDFKSNLNFSSNSFLDLNSYGLDLFAPTLSDVNRKGIQMFDKDPIIVYEDYAYAKLLEERKRREKKKKEEEEKKKKEEEEKKKKEEEEKKKKEEEEKKKKEEEEKKKKEEEEKKKQEEEEKKKKEEEEKKKQEEGEKMKNEDEENKKNEDEEKKKNEEEEKKKQEEKNKKNEDEEKKKQEEEEKKKNEEEEKKKQEEGHSN.

The Cytoplasmic portion of the chain corresponds to M1–R27. The helical; Signal-anchor for type II membrane protein transmembrane segment at I28–P48 threads the bilayer. Residues Q49–N1178 lie on the Lumenal side of the membrane. Residues D519–D521 carry the DXD motif. Residues E1041 to N1178 form a disordered region. Repeat copies occupy residues K1042–E1049, K1050–E1057, K1058–E1065, K1066–E1073, K1074–E1081, and K1082–E1089. The segment at K1042–E1174 is 17 X 8 AA tandem repeats of K-K-K-K-E-E-E-E. Residues K1090–E1097 form a 7; approximate repeat. Repeat unit 8 spans residues K1098–E1105. A 9; approximate repeat occupies K1106–E1113. The stretch at K1114–E1121 is one 10; approximate repeat. The 11; approximate repeat unit spans residues N1122–E1129. The stretch at K1130–E1137 is repeat 12. A 13; approximate repeat occupies K1138–K1144. The 14; approximate repeat unit spans residues N1145–E1152. One copy of the 15; approximate repeat lies at K1153–E1160. Residues K1161–E1168 form a 16; approximate repeat. The stretch at K1169–E1174 is one 17; truncated repeat.

This sequence belongs to the MNN4 family.

It localises to the golgi apparatus membrane. Golgi apparatus protein involved in N-glycan mannosylphosphorylation. While MNN4 seems to have a regulatory role in N-glycan mannosylphosphorylation, a transferase activity of MNN4 can not be ruled out. Mediates mannosylphosphate transfer in both the core and outer chain portions of N-linked oligosaccharides. Has partially redundant function with MNN14. The polypeptide is Mannosyltransferase regulator 4 (Saccharomyces cerevisiae (strain ATCC 204508 / S288c) (Baker's yeast)).